A 223-amino-acid polypeptide reads, in one-letter code: Phosphoribosylformylglycinamidine synthase subunit PurQ (223 aa).

A Glutamine amidotransferase type-1 domain is found at 4 to 223 (FAVVVFPGTN…FRSMVEWARK (220 aa)). Cysteine 85 acts as the Nucleophile in catalysis. Residues histidine 196 and glutamate 198 contribute to the active site.

As to quaternary structure, part of the FGAM synthase complex composed of 1 PurL, 1 PurQ and 2 PurS subunits.

Its subcellular location is the cytoplasm. It carries out the reaction N(2)-formyl-N(1)-(5-phospho-beta-D-ribosyl)glycinamide + L-glutamine + ATP + H2O = 2-formamido-N(1)-(5-O-phospho-beta-D-ribosyl)acetamidine + L-glutamate + ADP + phosphate + H(+). The enzyme catalyses L-glutamine + H2O = L-glutamate + NH4(+). The protein operates within purine metabolism; IMP biosynthesis via de novo pathway; 5-amino-1-(5-phospho-D-ribosyl)imidazole from N(2)-formyl-N(1)-(5-phospho-D-ribosyl)glycinamide: step 1/2. Functionally, part of the phosphoribosylformylglycinamidine synthase complex involved in the purines biosynthetic pathway. Catalyzes the ATP-dependent conversion of formylglycinamide ribonucleotide (FGAR) and glutamine to yield formylglycinamidine ribonucleotide (FGAM) and glutamate. The FGAM synthase complex is composed of three subunits. PurQ produces an ammonia molecule by converting glutamine to glutamate. PurL transfers the ammonia molecule to FGAR to form FGAM in an ATP-dependent manner. PurS interacts with PurQ and PurL and is thought to assist in the transfer of the ammonia molecule from PurQ to PurL. The chain is Phosphoribosylformylglycinamidine synthase subunit PurQ from Thermococcus kodakarensis (strain ATCC BAA-918 / JCM 12380 / KOD1) (Pyrococcus kodakaraensis (strain KOD1)).